The sequence spans 375 residues: ATP-sensitive inward rectifier potassium channel 15 (375 aa).

Residues 1–60 (MDAIHLGMSSAPLVKHTNGVGLKAHRPRVMSKSGHSNVRIDKVDGIYLLYLQDLWTTVID) lie on the Cytoplasmic side of the membrane. Residues 61 to 87 (MKWRYKLTLFAATFVMTWFLFGVVYYA) form a helical membrane-spanning segment. Topologically, residues 88 to 113 (IAFIHGDLQLGESNSNHTPCIMKVDS) are extracellular. Positions 114–130 (LTGAFLFSLESQTTIGY) form an intramembrane region, helical; Pore-forming. The short motif at 127 to 132 (TIGYGV) is the Selectivity filter element. Residues 131–139 (GVRSITEEC) are Extracellular-facing. A helical membrane pass occupies residues 140–165 (PHAIFLLVAQLVITTLIEIFITGTFL). The Cytoplasmic segment spans residues 166–375 (AKIARPKKRA…RSLLLQQSNV (210 aa)).

Belongs to the inward rectifier-type potassium channel (TC 1.A.2.1) family. KCNJ15 subfamily. As to quaternary structure, can form heteromultimeric channels with Kir5.1/KCNJ16. Interacts with PATJ. In terms of tissue distribution, expressed in the proximal segment of the nephron.

It is found in the membrane. The protein resides in the cell membrane. The enzyme catalyses K(+)(in) = K(+)(out). Channel activity is regulated by variations of cytosolic pH; reversibly inhibited by acidic pH values. Inhibited by Ba(2+) and Cs(+) in a voltage-dependent manner. Functionally, inward rectifier potassium channels are characterized by a greater tendency to allow potassium to flow into the cell rather than out of it. Their voltage dependence is regulated by the concentration of extracellular potassium; as external potassium is raised, the voltage range of the channel opening shifts to more positive voltages. The inward rectification is mainly due to the blockage of outward current by internal magnesium. The protein is ATP-sensitive inward rectifier potassium channel 15 (Kcnj15) of Mus musculus (Mouse).